A 244-amino-acid polypeptide reads, in one-letter code: High frequency lysogenization protein HflD homolog (244 aa).

It belongs to the HflD family.

It localises to the cytoplasm. The protein resides in the cell inner membrane. This chain is High frequency lysogenization protein HflD homolog, found in Acinetobacter baumannii (strain ATCC 17978 / DSM 105126 / CIP 53.77 / LMG 1025 / NCDC KC755 / 5377).